Reading from the N-terminus, the 182-residue chain is Oligoribonuclease (182 aa).

Positions 8-171 constitute an Exonuclease domain; the sequence is LIWIDLEMTG…DDIRESIKEL (164 aa). The active site involves Tyr129.

The protein belongs to the oligoribonuclease family.

The protein resides in the cytoplasm. Its function is as follows. 3'-to-5' exoribonuclease specific for small oligoribonucleotides. The sequence is that of Oligoribonuclease from Haemophilus influenzae (strain 86-028NP).